Here is a 788-residue protein sequence, read N- to C-terminus: Elongator complex protein 2 (788 aa).

WD repeat units lie at residues 13 to 51, 57 to 96, 102 to 139, 200 to 243, 279 to 318, 336 to 377, 383 to 422, and 437 to 475; these read GANK…NKGV, GHEA…HLQC, HYSK…DEFG, GHED…LIDD, GHDD…GIWV, GSSG…ICDQ, GATK…ASGR, and IHGY…AGML. The tract at residues 490 to 530 is disordered; it reads PDSATVPVLGLSNKAGEDDANEDDEEEEGGNKETPDITDPL. Residue Ser492 is modified to Phosphoserine. Residues 507–517 show a composition bias toward acidic residues; the sequence is DDANEDDEEEE. WD repeat units follow at residues 556-600, 604-643, 651-692, 699-742, and 750-788; these read GHGF…EIKP, FHSL…NTFE, PHTR…ADDY, KHTK…FELI, and TPAD…LAYE.

This sequence belongs to the WD repeat ELP2 family. As to quaternary structure, component of the elongator complex which consists of ELP1/IKI3, ELP2, ELP3, ELP4, ELP5/IKI1 and ELP6. The elongator complex is composed of two copies of the Elp123 subcomplex (composed of ELP1/IKI3, ELP2 and ELP3) and two copies of the Elp456 subcomplex (composed of ELP4, ELP5/IKI1 and ELP6). The Elp123 subcomplex forms a two-lobed scaffold, which binds the Elp456 subcomplex asymmetrically. In the complex, ELP2 interacts with ELP1/IKI3. In each lobe, ELP2 is tightly sandwiched between ELP1/IKI3 and ELP3. The Elp123 subcomplex binds tRNA through ELP1/IKI3 and ELP3 and can bind 2 tRNAs simultaneously. tRNA-binding induces conformational rearrangements which precisely position the targeted anticodon base in the active site. The Elp456 subcomplex binds tRNA and has ATPase activity. Interacts with KTI11/DPH3.

The protein resides in the cytoplasm. The protein localises to the nucleus. It participates in tRNA modification; 5-methoxycarbonylmethyl-2-thiouridine-tRNA biosynthesis. Its function is as follows. Component of the elongator complex, a multiprotein complex which is required for multiple tRNA modifications, including mcm5U (5-methoxycarbonylmethyl uridine), mcm5s2U (5-methoxycarbonylmethyl-2-thiouridine), and ncm5U (5-carbamoylmethyl uridine). The elongator complex catalyzes formation of carboxymethyluridine in the wobble base at position 34 in tRNAs. It functions as a gamma-toxin target (TOT); disruption of the complex confers resistance to Kluyveromyces lactis toxin zymocin (pGKL1 killer toxin). May also be involved in sensitivity to Pichia inositovora toxin. ELP2 binds to microtubules. Independently, ELP2 may be involved in polarized exocytosis. The sequence is that of Elongator complex protein 2 (ELP2) from Saccharomyces cerevisiae (strain ATCC 204508 / S288c) (Baker's yeast).